A 566-amino-acid chain; its full sequence is Putative ABC transporter ATP-binding protein BC_2655 (566 aa).

ABC transporter domains follow at residues 5–246 and 300–533; these read ISFE…GLRE and LKVE…ANLR. ATP-binding positions include 39-46 and 333-340; these read GRSGSGKS and GHNGAGKS.

It belongs to the ABC transporter superfamily.

The protein localises to the cell membrane. In terms of biological role, probably part of an ABC transporter complex. Responsible for energy coupling to the transport system. In Bacillus cereus (strain ATCC 14579 / DSM 31 / CCUG 7414 / JCM 2152 / NBRC 15305 / NCIMB 9373 / NCTC 2599 / NRRL B-3711), this protein is Putative ABC transporter ATP-binding protein BC_2655.